The following is a 278-amino-acid chain: Purine nucleoside phosphorylase YlmD (278 aa).

3 residues coordinate Zn(2+): histidine 87, cysteine 132, and histidine 149.

Belongs to the purine nucleoside phosphorylase YfiH/LACC1 family. Homodimer. It depends on Cu(2+) as a cofactor. Zn(2+) serves as cofactor.

The enzyme catalyses adenosine + phosphate = alpha-D-ribose 1-phosphate + adenine. It carries out the reaction S-methyl-5'-thioadenosine + phosphate = 5-(methylsulfanyl)-alpha-D-ribose 1-phosphate + adenine. The catalysed reaction is inosine + phosphate = alpha-D-ribose 1-phosphate + hypoxanthine. It catalyses the reaction adenosine + H2O + H(+) = inosine + NH4(+). Purine nucleoside enzyme that catalyzes the phosphorolysis of adenosine and inosine nucleosides, yielding D-ribose 1-phosphate and the respective free bases, adenine and hypoxanthine. Also catalyzes the phosphorolysis of S-methyl-5'-thioadenosine into adenine and S-methyl-5-thio-alpha-D-ribose 1-phosphate. Also has adenosine deaminase activity. This Bacillus subtilis (strain 168) protein is Purine nucleoside phosphorylase YlmD (ylmD).